The chain runs to 279 residues: Probable endonuclease 4 (279 aa).

Zn(2+) is bound by residues His-69, His-109, Glu-145, Asp-179, His-182, His-216, Asp-229, His-231, and Glu-261.

Belongs to the AP endonuclease 2 family. Zn(2+) is required as a cofactor.

It carries out the reaction Endonucleolytic cleavage to 5'-phosphooligonucleotide end-products.. Endonuclease IV plays a role in DNA repair. It cleaves phosphodiester bonds at apurinic or apyrimidinic (AP) sites, generating a 3'-hydroxyl group and a 5'-terminal sugar phosphate. The chain is Probable endonuclease 4 from Serratia proteamaculans (strain 568).